The chain runs to 57 residues: Small ribosomal subunit protein eS27 (57 aa).

Zn(2+)-binding residues include Cys10, Cys13, Cys29, and Cys32. Residues 10-32 (CPDCENEQTVFGKASTEVACAVC) form a C4-type zinc finger.

It belongs to the eukaryotic ribosomal protein eS27 family. As to quaternary structure, part of the 30S ribosomal subunit. The cofactor is Zn(2+).

This chain is Small ribosomal subunit protein eS27, found in Halobacterium salinarum (strain ATCC 29341 / DSM 671 / R1).